The sequence spans 98 residues: Integration host factor subunit alpha (98 aa).

The disordered stretch occupies residues 52–73 (FDLRQKSERPGRNPKTGEDIPI). Over residues 54–73 (LRQKSERPGRNPKTGEDIPI) the composition is skewed to basic and acidic residues.

The protein belongs to the bacterial histone-like protein family. As to quaternary structure, heterodimer of an alpha and a beta chain.

This protein is one of the two subunits of integration host factor, a specific DNA-binding protein that functions in genetic recombination as well as in transcriptional and translational control. The protein is Integration host factor subunit alpha of Pseudoalteromonas atlantica (strain T6c / ATCC BAA-1087).